We begin with the raw amino-acid sequence, 103 residues long: Large ribosomal subunit protein bL21 (103 aa).

This sequence belongs to the bacterial ribosomal protein bL21 family. As to quaternary structure, part of the 50S ribosomal subunit. Contacts protein L20.

In terms of biological role, this protein binds to 23S rRNA in the presence of protein L20. The polypeptide is Large ribosomal subunit protein bL21 (Verminephrobacter eiseniae (strain EF01-2)).